Reading from the N-terminus, the 355-residue chain is NADH dehydrogenase [ubiquinone] 1 alpha subcomplex subunit 10, mitochondrial (355 aa).

Residues 1-35 constitute a mitochondrion transit peptide; that stretch reads MALRLLRLVPASAPARGLAAGAQRVGRIHTSVHCK. Lys-122 carries the N6-acetyllysine; alternate modification. The residue at position 122 (Lys-122) is an N6-succinyllysine; alternate. Position 250 is a phosphoserine; by PINK1 (Ser-250). An N6-succinyllysine modification is found at Lys-285.

This sequence belongs to the complex I NDUFA10 subunit family. In terms of assembly, complex I is composed of 45 different subunits. This a component of the hydrophobic protein fraction. It depends on FAD as a cofactor. Post-translationally, phosphorylation at Ser-250 by PINK1 is required for the binding and/or reduction of the complex I substrate ubiquinone. Acetylation of Lys-242 is observed in liver mitochondria from fasted mice but not from fed mice.

Its subcellular location is the mitochondrion matrix. Its function is as follows. Accessory subunit of the mitochondrial membrane respiratory chain NADH dehydrogenase (Complex I), that is believed not to be involved in catalysis. Complex I functions in the transfer of electrons from NADH to the respiratory chain. The immediate electron acceptor for the enzyme is believed to be ubiquinone. In Mus musculus (Mouse), this protein is NADH dehydrogenase [ubiquinone] 1 alpha subcomplex subunit 10, mitochondrial (Ndufa10).